Here is a 336-residue protein sequence, read N- to C-terminus: Phosphate acetyltransferase (336 aa).

The protein belongs to the phosphate acetyltransferase and butyryltransferase family.

It is found in the cytoplasm. It carries out the reaction acetyl-CoA + phosphate = acetyl phosphate + CoA. It participates in metabolic intermediate biosynthesis; acetyl-CoA biosynthesis; acetyl-CoA from acetate: step 2/2. The chain is Phosphate acetyltransferase (pta) from Treponema pallidum (strain Nichols).